A 180-amino-acid chain; its full sequence is uncharacterized protein (180 aa).

Residues 3–33 are a coiled coil; sequence QQQSNNSNDNKEQLDRVIESLNRVNSETKQI.

This is an uncharacterized protein from Acanthamoeba polyphaga (Amoeba).